Here is a 116-residue protein sequence, read N- to C-terminus: Ly-6/neurotoxin-like protein 1 (116 aa).

The N-terminal stretch at 1–20 (MTPLLTLILVVLMGLPLAQA) is a signal peptide. In terms of domain architecture, UPAR/Ly6 spans 21-107 (LDCHVCAYNG…TPATLALAPI (87 aa)). 5 disulfides stabilise this stretch: Cys23-Cys46, Cys26-Cys33, Cys39-Cys64, Cys68-Cys85, and Cys86-Cys91. Residue Cys91 is the site of GPI-anchor amidated cysteine attachment. A propeptide spans 92 to 116 (NGTGLATPATLALAPILLATLWGLL) (removed in mature form).

Interacts with nAChRs containing alpha-4:beta-2 (CHRNA4:CHRNB2) and alpha-7 (CHRNA7) subunits. Interacts with CHRNA4 probably in the endoplasmic reticulum prior to nAChR pentameric assembly. Interacts with KCNA2/Potassium voltage-gated channel subfamily A member 2.

The protein localises to the cell membrane. Its subcellular location is the cell projection. It localises to the dendrite. It is found in the endoplasmic reticulum. Its function is as follows. Acts in different tissues through interaction to nicotinic acetylcholine receptors (nAChRs). The proposed role as modulator of nAChR activity seems to be dependent on the nAChR subtype and stoichiometry, and to involve an effect on nAChR trafficking and its cell surface expression, and on single channel properties of the nAChR inserted in the plasma membrane. Modulates functional properties of nicotinic acetylcholine receptors (nAChRs) to prevent excessive excitation, and hence neurodegeneration. Enhances desensitization by increasing both the rate and extent of desensitization of alpha-4:beta-2-containing nAChRs and slowing recovery from desensitization. Promotes large amplitude ACh-evoked currents through alpha-4:beta-2 nAChRs. Is involved in regulation of the nAChR pentameric assembly in the endoplasmic reticulum. Shifts stoichiometry from high sensitivity alpha-4(2):beta-2(3) to low sensitivity alpha-4(3):beta-2(2) nAChR. In vitro modulates alpha-3:beta-4-containing nAChRs. Reduces cell surface expression of (alpha-3:beta-4)(2):beta-4 and (alpha-3:beta-4)(2):alpha-5 nAChRs suggesting an interaction with nAChR alpha-3(-):(+)beta-4 subunit interfaces and an allosteric mode. Corresponding single channel effects characterized by decreased unitary conductance, altered burst proportions and enhanced desensitization/inactivation seem to depend on nAChR alpha:alpha subunit interfaces and are greater in (alpha-3:beta-2)(2):alpha-3 when compared to (alpha-3:beta-2)(2):alpha-5 nAChRs. Prevents plasticity in the primary visual cortex late in life. This is Ly-6/neurotoxin-like protein 1 from Homo sapiens (Human).